A 127-amino-acid polypeptide reads, in one-letter code: Aspartate 1-decarboxylase (127 aa).

Ser25 acts as the Schiff-base intermediate with substrate; via pyruvic acid in catalysis. Pyruvic acid (Ser) is present on Ser25. Substrate is bound at residue Thr57. The active-site Proton donor is the Tyr58. A substrate-binding site is contributed by 73-75 (GAA).

The protein belongs to the PanD family. In terms of assembly, heterooctamer of four alpha and four beta subunits. It depends on pyruvate as a cofactor. In terms of processing, is synthesized initially as an inactive proenzyme, which is activated by self-cleavage at a specific serine bond to produce a beta-subunit with a hydroxyl group at its C-terminus and an alpha-subunit with a pyruvoyl group at its N-terminus.

It localises to the cytoplasm. It catalyses the reaction L-aspartate + H(+) = beta-alanine + CO2. Its pathway is cofactor biosynthesis; (R)-pantothenate biosynthesis; beta-alanine from L-aspartate: step 1/1. Catalyzes the pyruvoyl-dependent decarboxylation of aspartate to produce beta-alanine. This Bacillus subtilis (strain 168) protein is Aspartate 1-decarboxylase.